The sequence spans 194 residues: Nucleoside triphosphate pyrophosphatase (194 aa).

Aspartate 68 acts as the Proton acceptor in catalysis.

The protein belongs to the Maf family. It depends on a divalent metal cation as a cofactor.

The protein resides in the cytoplasm. It carries out the reaction a ribonucleoside 5'-triphosphate + H2O = a ribonucleoside 5'-phosphate + diphosphate + H(+). The catalysed reaction is a 2'-deoxyribonucleoside 5'-triphosphate + H2O = a 2'-deoxyribonucleoside 5'-phosphate + diphosphate + H(+). Functionally, nucleoside triphosphate pyrophosphatase. May have a dual role in cell division arrest and in preventing the incorporation of modified nucleotides into cellular nucleic acids. In Corynebacterium jeikeium (strain K411), this protein is Nucleoside triphosphate pyrophosphatase.